Reading from the N-terminus, the 851-residue chain is Receptor like protein kinase S.2 (851 aa).

Residues 117 to 436 enclose the Protein kinase 1 domain; sequence FSDELILGSG…LPSFKSHPLY (320 aa). ATP-binding positions include 123–131 and K146; that span reads LGSGGFGRV. D248 acts as the Proton acceptor in catalysis. The disordered stretch occupies residues 448-471; the sequence is SATTTTTRTTMTTTTSTTSFNASS. In terms of domain architecture, Protein kinase 2 spans 532 to 819; the sequence is FSDARRVAEV…SILDGSERFF (288 aa). ATP contacts are provided by residues 538 to 546 and K560; that span reads VAEVDFGTA.

This sequence belongs to the protein kinase superfamily. Ser/Thr protein kinase family.

The enzyme catalyses L-seryl-[protein] + ATP = O-phospho-L-seryl-[protein] + ADP + H(+). The catalysed reaction is L-threonyl-[protein] + ATP = O-phospho-L-threonyl-[protein] + ADP + H(+). The chain is Receptor like protein kinase S.2 (LECRKS2) from Arabidopsis thaliana (Mouse-ear cress).